We begin with the raw amino-acid sequence, 479 residues long: Aspartyl/glutamyl-tRNA(Asn/Gln) amidotransferase subunit B (479 aa).

It belongs to the GatB/GatE family. GatB subfamily. As to quaternary structure, heterotrimer of A, B and C subunits.

It carries out the reaction L-glutamyl-tRNA(Gln) + L-glutamine + ATP + H2O = L-glutaminyl-tRNA(Gln) + L-glutamate + ADP + phosphate + H(+). It catalyses the reaction L-aspartyl-tRNA(Asn) + L-glutamine + ATP + H2O = L-asparaginyl-tRNA(Asn) + L-glutamate + ADP + phosphate + 2 H(+). Its function is as follows. Allows the formation of correctly charged Asn-tRNA(Asn) or Gln-tRNA(Gln) through the transamidation of misacylated Asp-tRNA(Asn) or Glu-tRNA(Gln) in organisms which lack either or both of asparaginyl-tRNA or glutaminyl-tRNA synthetases. The reaction takes place in the presence of glutamine and ATP through an activated phospho-Asp-tRNA(Asn) or phospho-Glu-tRNA(Gln). This Streptococcus mutans serotype c (strain ATCC 700610 / UA159) protein is Aspartyl/glutamyl-tRNA(Asn/Gln) amidotransferase subunit B.